The primary structure comprises 286 residues: Ribosome-inactivating protein momordin I (286 aa).

An N-terminal signal peptide occupies residues 1 to 23 (MSRFSVLSFLILAIFLGGSIVKG). Glu-183 is a catalytic residue. The N-linked (GlcNAc...) asparagine glycan is linked to Asn-250. Positions 270-286 (AEGDNGDVSTTHGFSSY) are cleaved as a propeptide — removed in mature form.

This sequence belongs to the ribosome-inactivating protein family. Type 1 RIP subfamily.

The catalysed reaction is Endohydrolysis of the N-glycosidic bond at one specific adenosine on the 28S rRNA.. The protein is Ribosome-inactivating protein momordin I of Momordica charantia (Bitter gourd).